Here is a 417-residue protein sequence, read N- to C-terminus: mRNA export factor ICP27 homolog (417 aa).

Residues 1-28 show a composition bias toward acidic residues; the sequence is MEDIIEGGISSDDDFDSSDSSSDEEESD. The segment at 1 to 143 is disordered; it reads MEDIIEGGIS…NGPLRNGPPR (143 aa). Positions 64 to 120 are interaction with RNA; the sequence is RQRSPITWEHQSPLSRVYRSPSPMRFGKRPRISSNSTSRSCKTSWADRVREAAAQRR. The short motif at 88–94 is the Nuclear localization signal element; the sequence is RFGKRPR. The span at 96 to 107 shows a compositional bias: low complexity; the sequence is SSNSTSRSCKTS. Residues 106 to 120 are interaction with host ALYREF or mouse ALYREF2; that stretch reads TSWADRVREAAAQRR. Residues 108-117 show a composition bias toward basic and acidic residues; that stretch reads WADRVREAAA. Positions 118-127 match the Nuclear localization signal motif; sequence QRRPSRPFRK. Residues 120–130 show a composition bias toward basic residues; it reads RPSRPFRKPYS. A compositionally biased stretch (low complexity) spans 132-141; the sequence is PRNGPLRNGP. Zn(2+) contacts are provided by C295, H385, C389, and C394. The segment at 295 to 394 adopts a CHC2-type zinc-finger fold; it reads CLMQTTPQDH…HLNKCPSSTC (100 aa).

The protein belongs to the HHV-1 ICP27 protein family. Homodimer. Homodimerization is required for transactivation. Interacts with host ALYREF and with mouse ALYREF2. Associates in a complex with RNA, and host export factors NXF1/TAP and ALYREF or ALYREF2; these interactions allow nuclear export of viral transcripts.

It is found in the host cytoplasm. Its subcellular location is the host nucleus. Probably acts as a viral splicing factor that regulates viral RNA splicing. Functions as a multifunctional regulator of the expression of viral lytic genes. Early protein that promotes the accumulation and nuclear export of viral intronless RNA transcripts by interacting with mRNAs and cellular export proteins. The chain is mRNA export factor ICP27 homolog (EJRF1) from Saimiriine herpesvirus 2 (strain 11) (SaHV-2).